Consider the following 350-residue polypeptide: Solute carrier family 35 member E4 (350 aa).

The segment covering 19–30 (GAAAGGAQAAGP) has biased composition (low complexity). The interval 19–42 (GAAAGGAQAAGPPEWPPGSPQALR) is disordered. The next 8 membrane-spanning stretches (helical) occupy residues 51–71 (MAAL…KWIF), 73–93 (VHGF…AALA), 110–132 (VLLL…RAVP), 135–155 (LAQL…ALLL), 218–238 (VTLL…AALV), 258–278 (ILLS…LLAL), 279–299 (TSAL…LILS), and 312–332 (YVGI…EFVA). Positions 125-179 (NVGLRAVPLDLAQLVTTTTPLFTLALSALLLGRRHHPLQLAAMGPLCLGAACSLA) constitute an EamA domain.

The protein belongs to the TPT transporter family. SLC35E subfamily.

It localises to the membrane. Putative transporter. The protein is Solute carrier family 35 member E4 (SLC35E4) of Homo sapiens (Human).